Here is a 252-residue protein sequence, read N- to C-terminus: Phosphoglycolate phosphatase (252 aa).

Catalysis depends on Asp-13, which acts as the Nucleophile. Mg(2+) contacts are provided by Asp-13, Asp-15, and Asp-192.

This sequence belongs to the HAD-like hydrolase superfamily. CbbY/CbbZ/Gph/YieH family. As to quaternary structure, monomer. Requires Mg(2+) as cofactor. Chloride serves as cofactor.

The enzyme catalyses 2-phosphoglycolate + H2O = glycolate + phosphate. It participates in organic acid metabolism; glycolate biosynthesis; glycolate from 2-phosphoglycolate: step 1/1. In terms of biological role, specifically catalyzes the dephosphorylation of 2-phosphoglycolate. Is involved in the dissimilation of the intracellular 2-phosphoglycolate formed during the DNA repair of 3'-phosphoglycolate ends, a major class of DNA lesions induced by oxidative stress. The chain is Phosphoglycolate phosphatase from Escherichia coli O157:H7.